The primary structure comprises 464 residues: Type I restriction enzyme EcoKI specificity subunit (464 aa).

The protein belongs to the type-I restriction system S methylase family. The type I restriction/modification system is composed of three polypeptides R, M and S. The restriction enzyme has stoichiometry R(2)M(2)S(1). The methyltransferase is composed of M(2)S(1). In terms of assembly, (Microbial infection) Interacts with Escherichia phage T7 protein Ocr; this interaction leads to the inhibition of the methyltransferase restriction enzyme M.EcoKI composed of M(2)S(1).

Its function is as follows. The specificity (S) subunit of a type I restriction enzyme; this subunit dictates DNA sequence specificity. The M and S subunits together form a methyltransferase (MTase) that methylates A-2 on the top and A-3 on the bottom strand of the sequence 5'-AACN(6)GTGC-3'. In the presence of the R subunit the complex can also act as an endonuclease, binding to the same target sequence but cutting the DNA some distance from this site. Whether the DNA is cut or modified depends on the methylation state of the target sequence. When the target site is unmodified, the DNA is cut. When the target site is hemimethylated, the complex acts as a maintenance MTase modifying the DNA so that both strands become methylated. After locating a non-methylated recognition site, the enzyme complex serves as a molecular motor that translocates DNA in an ATP-dependent manner until a collision occurs that triggers cleavage. The sequence is that of Type I restriction enzyme EcoKI specificity subunit from Escherichia coli (strain K12).